The sequence spans 675 residues: Mitochondrial distribution and morphology protein 12 (675 aa).

An SMP-LTD domain is found at 1-675 (MSIDLNWDTV…VYPSFWTFLV (675 aa)). Disordered stretches follow at residues 66 to 186 (LPDF…GTNH), 241 to 270 (GPSWIADQQQQQQQQNNMLPGGAGGGGAGG), 307 to 327 (GTGKPTPGPSPLTGTSTPLGT), 365 to 390 (TGPRHKRNPSSQSLNSVGDYSPVAPA), and 444 to 517 (PKQG…RFRE). Positions 78-101 (SSEESDSEEEVAYENEGEYLDDPV) are enriched in acidic residues. Over residues 123–137 (NSSTGSRNGSGPNSG) the composition is skewed to low complexity. Gly residues predominate over residues 261–270 (GGAGGGGAGG). Low complexity predominate over residues 317–327 (PLTGTSTPLGT). 2 stretches are compositionally biased toward polar residues: residues 373-382 (PSSQSLNSVG) and 454-469 (VSTLAPNSAGTSNNRA). Residues 497-510 (EPEEDEEEEEEGEE) are compositionally biased toward acidic residues.

The protein belongs to the MDM12 family. As to quaternary structure, component of the ER-mitochondria encounter structure (ERMES) or MDM complex, composed of mmm-1, mdm10, mdm12 and mdm34. A mmm-1 homodimer associates with one molecule of mdm12 on each side in a pairwise head-to-tail manner, and the SMP-LTD domains of mmm-1 and mdm12 generate a continuous hydrophobic tunnel for phospholipid trafficking.

The protein resides in the mitochondrion outer membrane. It localises to the endoplasmic reticulum membrane. In terms of biological role, component of the ERMES/MDM complex, which serves as a molecular tether to connect the endoplasmic reticulum (ER) and mitochondria. Components of this complex are involved in the control of mitochondrial shape and protein biogenesis, and function in nonvesicular lipid trafficking between the ER and mitochondria. Mdm12 is required for the interaction of the ER-resident membrane protein MMM1 and the outer mitochondrial membrane-resident beta-barrel protein mdm10. The mdm12-mmm-1 subcomplex functions in the major beta-barrel assembly pathway that is responsible for biogenesis of all mitochondrial outer membrane beta-barrel proteins, and acts in a late step after the SAM complex. The mdm10-mdm12-mmm-1 subcomplex further acts in the TOM40-specific pathway after the action of the mdm12-mmm1 complex. Essential for establishing and maintaining the structure of mitochondria and maintenance of mtDNA nucleoids. The polypeptide is Mitochondrial distribution and morphology protein 12 (Neurospora crassa (strain ATCC 24698 / 74-OR23-1A / CBS 708.71 / DSM 1257 / FGSC 987)).